A 217-amino-acid chain; its full sequence is Peptide deformylase 1 (217 aa).

2 residues coordinate Fe cation: Cys-129 and His-171. Residue Glu-172 is part of the active site. His-175 is a Fe cation binding site.

The protein belongs to the polypeptide deformylase family. The cofactor is Fe(2+).

It carries out the reaction N-terminal N-formyl-L-methionyl-[peptide] + H2O = N-terminal L-methionyl-[peptide] + formate. Functionally, removes the formyl group from the N-terminal Met of newly synthesized proteins. Requires at least a dipeptide for an efficient rate of reaction. N-terminal L-methionine is a prerequisite for activity but the enzyme has broad specificity at other positions. The polypeptide is Peptide deformylase 1 (Bifidobacterium longum (strain NCC 2705)).